The following is a 619-amino-acid chain: MSEILQKITDPKEIKDLDEKELEMLAKELREFLIESVSNTGGHFASNLGVIDLTVALFKNFDFSENRIIWDVGHQSYAYKILTGRKDKFNTLRQYGGLCGFPKRTESEYDFFATGHSSTSLSSAAGMARAQKILGKDNKVIAVIGDGALTGGMALEALNDIGYRKDNLIIILNDNQMSICKNVGGLATYLNKLRMGVGYNKLKSDIGSTLDTTSLGKRVKNSLSKLKDGIKKIVVPSMYFEDIGLKYFGIVDGHNIRELNEVLSIAKSIKGPVIIHTVTKKGKGYELAEKNPNKYHGVSPFDLGEGVISKFANRNYSSTFGEEMIKLAKNDDKVVAITAAMPDGTGLKDFREEFPDRFFDVGIAEQHAVTLAAGMAAEGLKPFFAVYSTFLQRAYDQVLHDVCIQNLPVTLCLDRAGLVGEDGETHQGIFDISFLSPMPNMTIVAPKCIDEMEVILKWASNFNAPLAIRYPRGGDIDVNLKPLSKIEYGKWEKVQEGEKIAIVATGKMVQHAMIAAQKIKEEKNIDILIINATFIKPIDKELLNSLSKDGFKIVTIEDNIKKGGFGEGVLEYLNEIGHEEKIVTLAFNDKFIEHGKPDILYRINGLDAEGIKNTLIELL.

Residues H74 and 115 to 117 (GHS) contribute to the thiamine diphosphate site. Residue D146 coordinates Mg(2+). Thiamine diphosphate-binding positions include 147–148 (GA), N175, Y285, and E365. N175 lines the Mg(2+) pocket.

This sequence belongs to the transketolase family. DXPS subfamily. As to quaternary structure, homodimer. Mg(2+) serves as cofactor. Requires thiamine diphosphate as cofactor.

It catalyses the reaction D-glyceraldehyde 3-phosphate + pyruvate + H(+) = 1-deoxy-D-xylulose 5-phosphate + CO2. Its pathway is metabolic intermediate biosynthesis; 1-deoxy-D-xylulose 5-phosphate biosynthesis; 1-deoxy-D-xylulose 5-phosphate from D-glyceraldehyde 3-phosphate and pyruvate: step 1/1. Catalyzes the acyloin condensation reaction between C atoms 2 and 3 of pyruvate and glyceraldehyde 3-phosphate to yield 1-deoxy-D-xylulose-5-phosphate (DXP). The protein is 1-deoxy-D-xylulose-5-phosphate synthase of Clostridium perfringens (strain SM101 / Type A).